A 276-amino-acid chain; its full sequence is NAD kinase (276 aa).

Asp61 serves as the catalytic Proton acceptor. Residues 61 to 62, Arg66, 135 to 136, Arg146, His163, Asp165, and Ala200 each bind NAD(+); these read DG and NE.

This sequence belongs to the NAD kinase family. A divalent metal cation is required as a cofactor.

The protein localises to the cytoplasm. It carries out the reaction NAD(+) + ATP = ADP + NADP(+) + H(+). Its function is as follows. Involved in the regulation of the intracellular balance of NAD and NADP, and is a key enzyme in the biosynthesis of NADP. Catalyzes specifically the phosphorylation on 2'-hydroxyl of the adenosine moiety of NAD to yield NADP. This is NAD kinase from Chloroflexus aurantiacus (strain ATCC 29366 / DSM 635 / J-10-fl).